A 295-amino-acid chain; its full sequence is Putative aquaporin-12B (295 aa).

At 1–22 the chain is on the cytoplasmic side; the sequence is MAGLNVSLSFFFATFTLCEAAR. A helical membrane pass occupies residues 23–41; it reads RASKALLPVGAYEVFAREA. Over 42 to 55 the chain is Extracellular; that stretch reads MRTLVELGPWAGDF. Residues 56–74 form a helical membrane-spanning segment; sequence GPDLLLTLLFLLFLAHGVT. The Cytoplasmic portion of the chain corresponds to 75–76; it reads LD. Positions 77-114 form an intramembrane region, discontinuously helical; it reads GASANPTVSLQEFLMAEESLPGTLLKLAAQGLGMQAAC. The NPA 1 signature appears at 81–83; it reads NPT. Over 115–120 the chain is Cytoplasmic; that stretch reads TLTRLC. A helical membrane pass occupies residues 121-142; the sequence is WAWELSDLHLLQSLMAQSCSSA. Over 143-145 the chain is Extracellular; the sequence is LRT. The chain crosses the membrane as a helical span at residues 146–166; sequence SVPHGALVEAACAFCFHLTLL. The Cytoplasmic segment spans residues 167–174; the sequence is HLRHSPPA. Residues 175 to 191 form a helical membrane-spanning segment; the sequence is YSGPAVALLVTVTAYTA. Residues 192 to 194 are Extracellular-facing; sequence GPF. The discontinuously helical intramembrane region spans 195 to 206; that stretch reads TSAFFNPALAAS. Residues 200–202 carry the NPA 2 motif; that stretch reads NPA. The Extracellular portion of the chain corresponds to 207 to 223; that stretch reads VTFACSGHTLLEYVQVY. A helical transmembrane segment spans residues 224–244; that stretch reads WLGPLTGMVLAVLLHQGRLPH. Over 245–295 the chain is Cytoplasmic; sequence LFQRNLFYGQKNKYRAPRGKPAPASGDTQTPAKGSSVREPGRSGVEGPHSS. The interval 257–295 is disordered; it reads KYRAPRGKPAPASGDTQTPAKGSSVREPGRSGVEGPHSS.

Belongs to the MIP/aquaporin (TC 1.A.8) family. AQP11/AQP12 subfamily. As to quaternary structure, homotetramer; each monomer provides an independent water pore.

It localises to the membrane. It catalyses the reaction H2O(in) = H2O(out). Functionally, putative aquaporin. Could form homotetrameric transmembrane channels, with each monomer independently mediating water transport across the plasma membrane along its osmotic gradient. This chain is Putative aquaporin-12B, found in Homo sapiens (Human).